Reading from the N-terminus, the 334-residue chain is Holliday junction branch migration complex subunit RuvB (334 aa).

The interval 1-179 (MTHKISVLHQ…FAFTGRVDYY (179 aa)) is large ATPase domain (RuvB-L). ATP is bound by residues L18, R19, G60, K63, T64, S65, 126–128 (EDF), R169, Y179, and R216. T64 is a Mg(2+) binding site. The tract at residues 180–250 (TDEDLVSILS…VAEKALAMLL (71 aa)) is small ATPAse domain (RuvB-S). The tract at residues 253 to 334 (NLGLNEIDIK…RNPKDRWGEE (82 aa)) is head domain (RuvB-H). DNA contacts are provided by R308 and R313.

The protein belongs to the RuvB family. As to quaternary structure, homohexamer. Forms an RuvA(8)-RuvB(12)-Holliday junction (HJ) complex. HJ DNA is sandwiched between 2 RuvA tetramers; dsDNA enters through RuvA and exits via RuvB. An RuvB hexamer assembles on each DNA strand where it exits the tetramer. Each RuvB hexamer is contacted by two RuvA subunits (via domain III) on 2 adjacent RuvB subunits; this complex drives branch migration. In the full resolvosome a probable DNA-RuvA(4)-RuvB(12)-RuvC(2) complex forms which resolves the HJ.

It is found in the cytoplasm. It carries out the reaction ATP + H2O = ADP + phosphate + H(+). Functionally, the RuvA-RuvB-RuvC complex processes Holliday junction (HJ) DNA during genetic recombination and DNA repair, while the RuvA-RuvB complex plays an important role in the rescue of blocked DNA replication forks via replication fork reversal (RFR). RuvA specifically binds to HJ cruciform DNA, conferring on it an open structure. The RuvB hexamer acts as an ATP-dependent pump, pulling dsDNA into and through the RuvAB complex. RuvB forms 2 homohexamers on either side of HJ DNA bound by 1 or 2 RuvA tetramers; 4 subunits per hexamer contact DNA at a time. Coordinated motions by a converter formed by DNA-disengaged RuvB subunits stimulates ATP hydrolysis and nucleotide exchange. Immobilization of the converter enables RuvB to convert the ATP-contained energy into a lever motion, pulling 2 nucleotides of DNA out of the RuvA tetramer per ATP hydrolyzed, thus driving DNA branch migration. The RuvB motors rotate together with the DNA substrate, which together with the progressing nucleotide cycle form the mechanistic basis for DNA recombination by continuous HJ branch migration. Branch migration allows RuvC to scan DNA until it finds its consensus sequence, where it cleaves and resolves cruciform DNA. The protein is Holliday junction branch migration complex subunit RuvB of Chlamydia trachomatis serovar A (strain ATCC VR-571B / DSM 19440 / HAR-13).